A 950-amino-acid polypeptide reads, in one-letter code: Valine--tRNA ligase (950 aa).

Positions 40–50 (PNVTGSLHMGH) match the 'HIGH' region motif. Positions 551–555 (KMSKS) match the 'KMSKS' region motif. K554 contacts ATP. The stretch at 881-950 (LIDKSAELGR…AEQRQKIAAL (70 aa)) forms a coiled coil.

This sequence belongs to the class-I aminoacyl-tRNA synthetase family. ValS type 1 subfamily. In terms of assembly, monomer.

The protein resides in the cytoplasm. The enzyme catalyses tRNA(Val) + L-valine + ATP = L-valyl-tRNA(Val) + AMP + diphosphate. Its function is as follows. Catalyzes the attachment of valine to tRNA(Val). As ValRS can inadvertently accommodate and process structurally similar amino acids such as threonine, to avoid such errors, it has a 'posttransfer' editing activity that hydrolyzes mischarged Thr-tRNA(Val) in a tRNA-dependent manner. The chain is Valine--tRNA ligase from Pseudomonas aeruginosa (strain ATCC 15692 / DSM 22644 / CIP 104116 / JCM 14847 / LMG 12228 / 1C / PRS 101 / PAO1).